Reading from the N-terminus, the 397-residue chain is Elongation factor Tu (397 aa).

The region spanning 10–207 (KPHCNIGTIG…EVDKYIPQPE (198 aa)) is the tr-type G domain. Residues 19-26 (GHVDHGKT) form a G1 region. Residue 19–26 (GHVDHGKT) participates in GTP binding. Residue Thr26 participates in Mg(2+) binding. The interval 61–65 (GITIS) is G2. Positions 82–85 (DCPG) are G3. GTP is bound by residues 82–86 (DCPGH) and 137–140 (NKCD). The tract at residues 137-140 (NKCD) is G4. The interval 175 to 177 (SAL) is G5.

The protein belongs to the TRAFAC class translation factor GTPase superfamily. Classic translation factor GTPase family. EF-Tu/EF-1A subfamily. As to quaternary structure, monomer.

It localises to the cytoplasm. The catalysed reaction is GTP + H2O = GDP + phosphate + H(+). Its function is as follows. GTP hydrolase that promotes the GTP-dependent binding of aminoacyl-tRNA to the A-site of ribosomes during protein biosynthesis. This Azorhizobium caulinodans (strain ATCC 43989 / DSM 5975 / JCM 20966 / LMG 6465 / NBRC 14845 / NCIMB 13405 / ORS 571) protein is Elongation factor Tu.